The primary structure comprises 629 residues: Chaperone protein HtpG (629 aa).

Residues 1–335 (MSSNPTSSVR…TEDLPLNVSR (335 aa)) are a; substrate-binding. The tract at residues 336–547 (ELVQASPVMA…KDALDSQFEK (212 aa)) is b. Residues 548–629 (MMKMMNKDAD…NELVEAATRS (82 aa)) are c.

This sequence belongs to the heat shock protein 90 family. In terms of assembly, homodimer.

It localises to the cytoplasm. Functionally, molecular chaperone. Has ATPase activity. The sequence is that of Chaperone protein HtpG from Chlorobaculum tepidum (strain ATCC 49652 / DSM 12025 / NBRC 103806 / TLS) (Chlorobium tepidum).